Consider the following 373-residue polypeptide: LIM domain-binding protein 2 (373 aa).

2 disordered regions span residues Ala-244–Ser-291 and Gln-327–Gln-373. Over residues Ser-263 to Gly-280 the composition is skewed to low complexity. The LIM interaction domain (LID) domain maps to Asp-298 to Glu-337. Polar residues predominate over residues Asn-341–Glu-361.

The protein belongs to the LDB family. In terms of assembly, interacts with LHX9. Interacts with SLK; leading to negatively regulate SLK kinase activity. Interacts with LMO4. Post-translationally, ubiquitinated by RLIM/RNF12, leading to its degradation by the proteasome.

The protein resides in the nucleus. Functionally, transcription cofactor. Binds to the LIM domain of a wide variety of LIM domain-containing transcription factors. This chain is LIM domain-binding protein 2 (LDB2), found in Homo sapiens (Human).